We begin with the raw amino-acid sequence, 273 residues long: Endochitinase EP3 (273 aa).

The first 28 residues, 1-28 (MLTPTISKSISLVTILLVLQAFSNTTKA), serve as a signal peptide directing secretion. Residue N24 is glycosylated (N-linked (GlcNAc...) asparagine). Positions 29-63 (QNCGCSSELCCSQFGFCGNTSDYCGVGCQQGPCFA) constitute a Chitin-binding type-1 domain. 4 cysteine pairs are disulfide-bonded: C31–C39, C33–C45, C38–C52, and C56–C61. The N-linked (GlcNAc...) asparagine glycan is linked to N47. The segment at 70–273 (VSVAEIVTQE…GVDPGNNLTC (204 aa)) is catalytic. E136 acts as the Proton donor in catalysis. N-linked (GlcNAc...) asparagine glycosylation is found at N157 and N270.

The protein belongs to the glycosyl hydrolase 19 family. Chitinase class I subfamily. As to expression, expressed in cells surrounding embryos, stems, seedlings, pollen, roots, shoots, inflorescence, flowers, siliques and leaves. Present in seedpods and seed embryos, but not in roots, inflorescence stems, leaves and flowers.

The enzyme catalyses Random endo-hydrolysis of N-acetyl-beta-D-glucosaminide (1-&gt;4)-beta-linkages in chitin and chitodextrins.. In terms of biological role, probably involved in hypersensitive reaction upon Xanthomonas campestris infection. The protein is Endochitinase EP3 of Arabidopsis thaliana (Mouse-ear cress).